The primary structure comprises 120 residues: Small ribosomal subunit protein uS13 (120 aa).

The tract at residues 96 to 120 is disordered; it reads PCRGQRTRTNARTRKGPRKAIAGKK.

The protein belongs to the universal ribosomal protein uS13 family. As to quaternary structure, part of the 30S ribosomal subunit. Forms a loose heterodimer with protein S19. Forms two bridges to the 50S subunit in the 70S ribosome.

Functionally, located at the top of the head of the 30S subunit, it contacts several helices of the 16S rRNA. In the 70S ribosome it contacts the 23S rRNA (bridge B1a) and protein L5 of the 50S subunit (bridge B1b), connecting the 2 subunits; these bridges are implicated in subunit movement. Contacts the tRNAs in the A and P-sites. This Neisseria gonorrhoeae (strain ATCC 700825 / FA 1090) protein is Small ribosomal subunit protein uS13.